Reading from the N-terminus, the 240-residue chain is MNPEKFILELSKHNFVLTDKQKEQFKLYFKFLIEVNEHVNLTRITEENEVYLKHFYDSITPLFVFGDVFKDGATLCDVGAGAGFPSIPLKILKPSLKVTIVDSLAKRLTFLKDLIAKLGLDNVELVHGRAEDVGQNKLYREKFDIVTARAVAKMSVLSEYCLPLVKKDGYFVALKGPKAEDELDEGKKALAVLGGKLIKDEELTLPGTTEERTLVLVKKVKETSKKYPRQAGTPRRKPIC.

S-adenosyl-L-methionine contacts are provided by residues G79, F84, 130-131, and R149; that span reads AE.

It belongs to the methyltransferase superfamily. RNA methyltransferase RsmG family.

It localises to the cytoplasm. Specifically methylates the N7 position of a guanine in 16S rRNA. In Lactobacillus helveticus (strain DPC 4571), this protein is Ribosomal RNA small subunit methyltransferase G.